The following is a 415-amino-acid chain: Gamma-glutamyl phosphate reductase (415 aa).

Belongs to the gamma-glutamyl phosphate reductase family.

It is found in the cytoplasm. The enzyme catalyses L-glutamate 5-semialdehyde + phosphate + NADP(+) = L-glutamyl 5-phosphate + NADPH + H(+). The protein operates within amino-acid biosynthesis; L-proline biosynthesis; L-glutamate 5-semialdehyde from L-glutamate: step 2/2. In terms of biological role, catalyzes the NADPH-dependent reduction of L-glutamate 5-phosphate into L-glutamate 5-semialdehyde and phosphate. The product spontaneously undergoes cyclization to form 1-pyrroline-5-carboxylate. The chain is Gamma-glutamyl phosphate reductase from Dictyoglomus thermophilum (strain ATCC 35947 / DSM 3960 / H-6-12).